A 277-amino-acid polypeptide reads, in one-letter code: Phosphate import ATP-binding protein PstB (277 aa).

An ABC transporter domain is found at 31 to 272 (IEVPGLSLFY…PAKKQTEDYI (242 aa)). 63-70 (GPSGCGKS) provides a ligand contact to ATP.

The protein belongs to the ABC transporter superfamily. Phosphate importer (TC 3.A.1.7) family. As to quaternary structure, the complex is composed of two ATP-binding proteins (PstB), two transmembrane proteins (PstC and PstA) and a solute-binding protein (PstS).

The protein localises to the cell inner membrane. The catalysed reaction is phosphate(out) + ATP + H2O = ADP + 2 phosphate(in) + H(+). Functionally, part of the ABC transporter complex PstSACB involved in phosphate import. Responsible for energy coupling to the transport system. This Pseudomonas putida (Arthrobacter siderocapsulatus) protein is Phosphate import ATP-binding protein PstB.